We begin with the raw amino-acid sequence, 233 residues long: Demethylmenaquinone methyltransferase (233 aa).

Residues Thr-58, Asp-79, and 106–107 contribute to the S-adenosyl-L-methionine site; that span reads NA.

This sequence belongs to the class I-like SAM-binding methyltransferase superfamily. MenG/UbiE family.

The catalysed reaction is a 2-demethylmenaquinol + S-adenosyl-L-methionine = a menaquinol + S-adenosyl-L-homocysteine + H(+). Its pathway is quinol/quinone metabolism; menaquinone biosynthesis; menaquinol from 1,4-dihydroxy-2-naphthoate: step 2/2. In terms of biological role, methyltransferase required for the conversion of demethylmenaquinol (DMKH2) to menaquinol (MKH2). In Bacillus subtilis (strain 168), this protein is Demethylmenaquinone methyltransferase.